The primary structure comprises 482 residues: Glutamyl-tRNA(Gln) amidotransferase subunit A (482 aa).

Active-site charge relay system residues include K75 and S150. S174 (acyl-ester intermediate) is an active-site residue.

Belongs to the amidase family. GatA subfamily. Heterotrimer of A, B and C subunits.

It carries out the reaction L-glutamyl-tRNA(Gln) + L-glutamine + ATP + H2O = L-glutaminyl-tRNA(Gln) + L-glutamate + ADP + phosphate + H(+). Functionally, allows the formation of correctly charged Gln-tRNA(Gln) through the transamidation of misacylated Glu-tRNA(Gln) in organisms which lack glutaminyl-tRNA synthetase. The reaction takes place in the presence of glutamine and ATP through an activated gamma-phospho-Glu-tRNA(Gln). The chain is Glutamyl-tRNA(Gln) amidotransferase subunit A from Cyanothece sp. (strain PCC 7425 / ATCC 29141).